The primary structure comprises 48 residues: Large ribosomal subunit protein bL33B (48 aa).

Belongs to the bacterial ribosomal protein bL33 family.

This is Large ribosomal subunit protein bL33B (rpmG 2) from Mycoplasmoides gallisepticum (strain R(low / passage 15 / clone 2)) (Mycoplasma gallisepticum).